Here is a 582-residue protein sequence, read N- to C-terminus: Inactive metallocarboxypeptidase ECM14 (582 aa).

Positions 1–20 (MHILQVITGATLVSVPFVSA) are cleaved as a signal peptide. The propeptide occupies 21–172 (IPSSTSEFLP…QAVYESYPQP (152 aa)). Residues 200–522 (DYQPLSVIIP…NAVLVFGQFL (323 aa)) enclose the Peptidase M14 domain. His265 and Glu268 together coordinate Zn(2+). Substrate-binding positions include 265-268 (HARE), Arg323, and 340-341 (DR). Cys334 and Cys357 are joined by a disulfide. N-linked (GlcNAc...) asparagine glycans are attached at residues Asn381 and Asn387. His397 lines the Zn(2+) pocket. 398–399 (SY) contacts substrate. Residues 561 to 571 (SNQLEDDDNEN) show a composition bias toward acidic residues. Residues 561–582 (SNQLEDDDNENDTLLGFRTQKV) form a disordered region. An N-linked (GlcNAc...) asparagine glycan is attached at Asn571.

It belongs to the peptidase M14 family. It depends on Zn(2+) as a cofactor.

The protein localises to the vacuole. Its subcellular location is the secreted. Its function is as follows. Inactive carboxypeptidase that may play a role in cell wall organization and biogenesis. In Coccidioides posadasii (strain C735) (Valley fever fungus), this protein is Inactive metallocarboxypeptidase ECM14 (ECM14).